Reading from the N-terminus, the 156-residue chain is MPRKGPAPKRPLVLDPVYGSPLVTQLINKVLVDGKKSTAERIVYGALEGARAKSGGDPVAALKKAMENVKPSLEVRSRRVGGATYQVPVEVKPGRSTALALRWLVGYSKARREKTMTERLQNEILDASNGLGAAVKRREDTHKMAESNKAFAHYRW.

The protein belongs to the universal ribosomal protein uS7 family. In terms of assembly, part of the 30S ribosomal subunit. Contacts proteins S9 and S11.

One of the primary rRNA binding proteins, it binds directly to 16S rRNA where it nucleates assembly of the head domain of the 30S subunit. Is located at the subunit interface close to the decoding center, probably blocks exit of the E-site tRNA. The chain is Small ribosomal subunit protein uS7 from Arthrobacter sp. (strain FB24).